We begin with the raw amino-acid sequence, 364 residues long: Beta-parvin (364 aa).

The tract at residues 1–57 (MSSAPRSPTPRPRRMKKDESFLGKLGGTLARKRRAREVSDLQEEGKNAINSPMSPAL) is disordered. S7 carries the post-translational modification Phosphoserine. A compositionally biased stretch (basic and acidic residues) spans 36-46 (REVSDLQEEGK). The residue at position 54 (S54) is a Phosphoserine. 2 Calponin-homology (CH) domains span residues 87–194 (KELV…MHFR) and 254–361 (SVVK…TKYK).

It belongs to the parvin family. In terms of assembly, interacts with DYSF. Interacts with ILK, ARHGEF6, PXN (via LD motifs), ACTN2 and actin. In terms of tissue distribution, expressed predominantly in heart and skeletal muscle.

The protein localises to the cell junction. The protein resides in the focal adhesion. It is found in the cell membrane. It localises to the cytoplasm. Its subcellular location is the cytoskeleton. The protein localises to the cell projection. The protein resides in the lamellipodium. It is found in the myofibril. It localises to the sarcomere. Its subcellular location is the z line. Functionally, adapter protein that plays a role in integrin signaling via ILK and in activation of the GTPases CDC42 and RAC1 by guanine exchange factors, such as ARHGEF6. Is involved in the reorganization of the actin cytoskeleton and formation of lamellipodia. Plays a role in cell adhesion, cell spreading, establishment or maintenance of cell polarity, and cell migration. This chain is Beta-parvin (PARVB), found in Homo sapiens (Human).